The sequence spans 309 residues: Ribonuclease H2 subunit B (309 aa).

N-acetylalanine is present on alanine 2. Lysine 295 is modified (N6-acetyllysine). Residue serine 296 is modified to Phosphoserine.

The protein belongs to the RNase H2 subunit B family. As to quaternary structure, the RNase H2 complex is a heterotrimer composed of the catalytic subunit RNASEH2A and the non-catalytic subunits RNASEH2B and RNASEH2C.

It localises to the nucleus. In terms of biological role, non catalytic subunit of RNase H2, an endonuclease that specifically degrades the RNA of RNA:DNA hybrids. Participates in DNA replication, possibly by mediating the removal of lagging-strand Okazaki fragment RNA primers during DNA replication. Mediates the excision of single ribonucleotides from DNA:RNA duplexes. This chain is Ribonuclease H2 subunit B (RNASEH2B), found in Bos taurus (Bovine).